Reading from the N-terminus, the 153-residue chain is FAD synthase (153 aa).

ATP contacts are provided by residues 9 to 10 (TF), 14 to 17 (HPGH), aspartate 97, and tyrosine 124.

This sequence belongs to the archaeal FAD synthase family. Homodimer. It depends on a divalent metal cation as a cofactor.

It carries out the reaction FMN + ATP + H(+) = FAD + diphosphate. Its pathway is cofactor biosynthesis; FAD biosynthesis; FAD from FMN: step 1/1. In terms of biological role, catalyzes the transfer of the AMP portion of ATP to flavin mononucleotide (FMN) to produce flavin adenine dinucleotide (FAD) coenzyme. This Methanobrevibacter smithii (strain ATCC 35061 / DSM 861 / OCM 144 / PS) protein is FAD synthase.